A 258-amino-acid chain; its full sequence is Imidazole glycerol phosphate synthase subunit HisF (258 aa).

Residues Asp11 and Asp130 contribute to the active site.

This sequence belongs to the HisA/HisF family. In terms of assembly, heterodimer of HisH and HisF.

It localises to the cytoplasm. The catalysed reaction is 5-[(5-phospho-1-deoxy-D-ribulos-1-ylimino)methylamino]-1-(5-phospho-beta-D-ribosyl)imidazole-4-carboxamide + L-glutamine = D-erythro-1-(imidazol-4-yl)glycerol 3-phosphate + 5-amino-1-(5-phospho-beta-D-ribosyl)imidazole-4-carboxamide + L-glutamate + H(+). Its pathway is amino-acid biosynthesis; L-histidine biosynthesis; L-histidine from 5-phospho-alpha-D-ribose 1-diphosphate: step 5/9. Functionally, IGPS catalyzes the conversion of PRFAR and glutamine to IGP, AICAR and glutamate. The HisF subunit catalyzes the cyclization activity that produces IGP and AICAR from PRFAR using the ammonia provided by the HisH subunit. In Yersinia enterocolitica serotype O:8 / biotype 1B (strain NCTC 13174 / 8081), this protein is Imidazole glycerol phosphate synthase subunit HisF.